A 120-amino-acid chain; its full sequence is C-C motif chemokine 2 (120 aa).

The N-terminal stretch at 1–23 (MQRSSVLLCLLVIEATFCSLLMA) is a signal peptide. Position 24 is a pyrrolidone carboxylic acid (Q24). Disulfide bonds link C33–C57 and C34–C73. The disordered stretch occupies residues 91 to 120 (RTQQKQNSTAPQTSKPLNIRFTTQDPKNRS). Positions 93-120 (QQKQNSTAPQTSKPLNIRFTTQDPKNRS) are enriched in polar residues. N97 carries N-linked (GlcNAc...) asparagine glycosylation.

It belongs to the intercrine beta (chemokine CC) family. In terms of assembly, monomer or homodimer; in equilibrium. Is tethered on endothelial cells by glycosaminoglycan (GAG) side chains of proteoglycans. Interacts with TNFAIP6 (via Link domain). In terms of processing, processing at the N-terminus can regulate receptor and target cell selectivity. Deletion of the N-terminal residue converts it from an activator of basophil to an eosinophil chemoattractant. Post-translationally, N-Glycosylated.

The protein localises to the secreted. Functionally, acts as a ligand for C-C chemokine receptor CCR2. Signals through binding and activation of CCR2 and induces a strong chemotactic response and mobilization of intracellular calcium ions. Exhibits a chemotactic activity for monocytes and basophils but not neutrophils or eosinophils. Plays an important role in mediating peripheral nerve injury-induced neuropathic pain. Increases NMDA-mediated synaptic transmission in both dopamine D1 and D2 receptor-containing neurons, which may be caused by MAPK/ERK-dependent phosphorylation of GRIN2B/NMDAR2B. The polypeptide is C-C motif chemokine 2 (CCL2) (Cavia porcellus (Guinea pig)).